The following is a 229-amino-acid chain: Ribonuclease 3 (229 aa).

An RNase III domain is found at 4–133; sequence WEELQESVGF…FIGALYLDNG (130 aa). E46 contacts Mg(2+). The active site involves D50. 2 residues coordinate Mg(2+): D119 and E122. Residue E122 is part of the active site. One can recognise a DRBM domain in the interval 159-228; the sequence is DYKTQLQEIV…AQFAINQLTH (70 aa).

The protein belongs to the ribonuclease III family. As to quaternary structure, homodimer. Requires Mg(2+) as cofactor.

The protein resides in the cytoplasm. It catalyses the reaction Endonucleolytic cleavage to 5'-phosphomonoester.. Functionally, digests double-stranded RNA. Involved in the processing of primary rRNA transcript to yield the immediate precursors to the large and small rRNAs (23S and 16S). Processes some mRNAs, and tRNAs when they are encoded in the rRNA operon. Processes pre-crRNA and tracrRNA of type II CRISPR loci if present in the organism. This chain is Ribonuclease 3, found in Listeria innocua serovar 6a (strain ATCC BAA-680 / CLIP 11262).